The following is a 336-amino-acid chain: Dihydroorotate dehydrogenase (quinone) (336 aa).

FMN contacts are provided by residues 62-66 (AGLDK) and T86. A substrate-binding site is contributed by K66. 111–115 (NRMGF) provides a ligand contact to substrate. The FMN site is built by N139 and N172. N172 lines the substrate pocket. The active-site Nucleophile is S175. N177 is a binding site for substrate. FMN is bound by residues K217 and T245. A substrate-binding site is contributed by 246 to 247 (NT). Residues G268, G297, and 318 to 319 (YS) contribute to the FMN site.

It belongs to the dihydroorotate dehydrogenase family. Type 2 subfamily. Monomer. The cofactor is FMN.

The protein resides in the cell membrane. It catalyses the reaction (S)-dihydroorotate + a quinone = orotate + a quinol. The protein operates within pyrimidine metabolism; UMP biosynthesis via de novo pathway; orotate from (S)-dihydroorotate (quinone route): step 1/1. Its function is as follows. Catalyzes the conversion of dihydroorotate to orotate with quinone as electron acceptor. This is Dihydroorotate dehydrogenase (quinone) from Shigella dysenteriae serotype 1 (strain Sd197).